Consider the following 511-residue polypeptide: Cytochrome P450 77A2 (511 aa).

Cys-456 lines the heme pocket.

It belongs to the cytochrome P450 family. Heme is required as a cofactor.

This Solanum melongena (Eggplant) protein is Cytochrome P450 77A2 (CYP77A2).